The primary structure comprises 437 residues: Magnetosome protein MamN (437 aa).

11 consecutive transmembrane segments (helical) span residues 26-46 (LAVL…GSYT), 53-73 (SVYF…ALLA), 95-115 (WILV…NSLV), 136-156 (VPVI…TMIG), 174-194 (FIAG…VFFE), 226-246 (LLSY…LAGP), 252-268 (GWIA…LGRF), 281-301 (DILF…VGIL), 320-340 (AILL…GTSA), 358-378 (AAWW…LPGA), and 416-436 (WGMP…AVLV).

Belongs to the arsenite-antimonite (ArsB) efflux (TC 2.A.45) family.

The protein resides in the magnetosome membrane. Its function is as follows. Plays a role in biomineralization; might regulate pH in the magnetosome. This is Magnetosome protein MamN (mamN) from Paramagnetospirillum magneticum (strain ATCC 700264 / AMB-1) (Magnetospirillum magneticum).